The following is a 202-amino-acid chain: Type II restriction enzyme MthZI (202 aa).

The enzyme catalyses Endonucleolytic cleavage of DNA to give specific double-stranded fragments with terminal 5'-phosphates.. Its function is as follows. A P subtype restriction enzyme that recognizes the double-stranded sequence 5'-CTAG-3' and cleaves after C-1. This Methanothermobacter thermautotrophicus (Methanobacterium thermoformicicum) protein is Type II restriction enzyme MthZI.